The sequence spans 92 residues: Small ribosomal subunit protein uS19 (92 aa).

The protein belongs to the universal ribosomal protein uS19 family.

Its function is as follows. Protein S19 forms a complex with S13 that binds strongly to the 16S ribosomal RNA. This Limosilactobacillus reuteri (strain DSM 20016) (Lactobacillus reuteri) protein is Small ribosomal subunit protein uS19.